The chain runs to 114 residues: MAPRSLYLLAILLFSANLFAGVGFAAAADESASNVIVKGGKGKEREDGPEEPEETGPEETGPEETGPEETGPEETGPEETGPEETEPEPEPGAATLKSVALPFAVAAAALVAAF.

A signal peptide spans 1-27 (MAPRSLYLLAILLFSANLFAGVGFAAA). The segment at 33–95 (SNVIVKGGKG…EPEPEPGAAT (63 aa)) is disordered. Acidic residues predominate over residues 47 to 89 (DGPEEPEETGPEETGPEETGPEETGPEETGPEETGPEETEPEP). Repeat copies occupy residues 48-52 (GPEEP), 56-60 (GPEET), 61-65 (GPEET), 66-70 (GPEET), 71-75 (GPEET), 76-80 (GPEET), and 81-85 (GPEET). Residues 48 to 85 (GPEEPEETGPEETGPEETGPEETGPEETGPEETGPEET) are 7 X 5 AA tandem repeats of G-P-E-E-[PT]. Gly92 carries the GPI-anchor amidated glycine lipid modification. The propeptide occupies 93–114 (AATLKSVALPFAVAAAALVAAF).

The protein resides in the cell membrane. Functionally, major surface antigen of procyclic forms. This is Procyclic form-specific polypeptide A-alpha (PARPA-ALPHA) from Trypanosoma brucei brucei.